A 479-amino-acid chain; its full sequence is Aspartyl/glutamyl-tRNA(Asn/Gln) amidotransferase subunit B (479 aa).

This sequence belongs to the GatB/GatE family. GatB subfamily. In terms of assembly, heterotrimer of A, B and C subunits.

It catalyses the reaction L-glutamyl-tRNA(Gln) + L-glutamine + ATP + H2O = L-glutaminyl-tRNA(Gln) + L-glutamate + ADP + phosphate + H(+). It carries out the reaction L-aspartyl-tRNA(Asn) + L-glutamine + ATP + H2O = L-asparaginyl-tRNA(Asn) + L-glutamate + ADP + phosphate + 2 H(+). Allows the formation of correctly charged Asn-tRNA(Asn) or Gln-tRNA(Gln) through the transamidation of misacylated Asp-tRNA(Asn) or Glu-tRNA(Gln) in organisms which lack either or both of asparaginyl-tRNA or glutaminyl-tRNA synthetases. The reaction takes place in the presence of glutamine and ATP through an activated phospho-Asp-tRNA(Asn) or phospho-Glu-tRNA(Gln). The sequence is that of Aspartyl/glutamyl-tRNA(Asn/Gln) amidotransferase subunit B from Streptococcus pyogenes serotype M6 (strain ATCC BAA-946 / MGAS10394).